Consider the following 283-residue polypeptide: Bifunctional protein FolD (283 aa).

NADP(+) is bound by residues 166 to 168, S191, and I232; that span reads GAS.

It belongs to the tetrahydrofolate dehydrogenase/cyclohydrolase family. As to quaternary structure, homodimer.

The catalysed reaction is (6R)-5,10-methylene-5,6,7,8-tetrahydrofolate + NADP(+) = (6R)-5,10-methenyltetrahydrofolate + NADPH. It carries out the reaction (6R)-5,10-methenyltetrahydrofolate + H2O = (6R)-10-formyltetrahydrofolate + H(+). It participates in one-carbon metabolism; tetrahydrofolate interconversion. In terms of biological role, catalyzes the oxidation of 5,10-methylenetetrahydrofolate to 5,10-methenyltetrahydrofolate and then the hydrolysis of 5,10-methenyltetrahydrofolate to 10-formyltetrahydrofolate. In Chromobacterium violaceum (strain ATCC 12472 / DSM 30191 / JCM 1249 / CCUG 213 / NBRC 12614 / NCIMB 9131 / NCTC 9757 / MK), this protein is Bifunctional protein FolD.